The primary structure comprises 965 residues: Inner tegument protein (965 aa).

Residues tryptophan 489–phenylalanine 965 form an interaction with large tegument protein region.

This sequence belongs to the herpesviridae inner tegument protein family. In terms of assembly, interacts (via C-terminus) with the large tegument protein/LTP (via N-terminus).

The protein localises to the virion tegument. The protein resides in the host cytoplasm. It localises to the host nucleus. It is found in the host Golgi apparatus. Its subcellular location is the host trans-Golgi network. Functionally, plays an essential role in cytoplasmic secondary envelopment during viral egress. Interacts with the capsid via the large tegument protein/LTP and participates in its transport to the host trans-Golgi network (TGN) where secondary envelopment occurs. Modulates tegumentation and capsid accumulation at the viral assembly complex. The sequence is that of Inner tegument protein (63) from Equine herpesvirus 2 (strain 86/87) (EHV-2).